Reading from the N-terminus, the 371-residue chain is Histidinol-phosphate aminotransferase (371 aa).

Residue Lys-221 is modified to N6-(pyridoxal phosphate)lysine.

It belongs to the class-II pyridoxal-phosphate-dependent aminotransferase family. Histidinol-phosphate aminotransferase subfamily. Homodimer. It depends on pyridoxal 5'-phosphate as a cofactor.

It carries out the reaction L-histidinol phosphate + 2-oxoglutarate = 3-(imidazol-4-yl)-2-oxopropyl phosphate + L-glutamate. Its pathway is amino-acid biosynthesis; L-histidine biosynthesis; L-histidine from 5-phospho-alpha-D-ribose 1-diphosphate: step 7/9. This Pseudoalteromonas atlantica (strain T6c / ATCC BAA-1087) protein is Histidinol-phosphate aminotransferase.